Here is a 657-residue protein sequence, read N- to C-terminus: Receptor-type tyrosine-protein phosphatase R (657 aa).

Positions 1-21 (MRRAVCFPALCLLLNLHAAGC) are cleaved as a signal peptide. The Extracellular portion of the chain corresponds to 22 to 227 (FSGNNDHFLA…EADKIWSKEG (206 aa)). A glycan (O-linked (Xyl...) (chondroitin sulfate) serine) is linked at S23. N-linked (GlcNAc...) asparagine glycosylation occurs at N129. Residues 228–248 (FYAVVIFLSIFVIIVTCLMIL) form a helical membrane-spanning segment. Residues 249–657 (YRLKERFQLS…ESRLSAETVQ (409 aa)) lie on the Cytoplasmic side of the membrane. The residue at position 272 (S272) is a Phosphoserine. S339 carries the post-translational modification Phosphoserine; by PKA. In terms of domain architecture, Tyrosine-protein phosphatase spans 393–647 (LQSEFMEIPM…EFVHHALCLY (255 aa)). Residues D554, 588–594 (CSAGIGR), and Q632 each bind substrate. C588 functions as the Phosphocysteine intermediate in the catalytic mechanism.

Belongs to the protein-tyrosine phosphatase family. Receptor class 7 subfamily. As to quaternary structure, interacts with MAPKs. As to expression, detected in cerebrospinal fluid (at protein level). Expressed in brain, placenta, small intestine, stomach, uterus and weakly in the prostate. Isoform alpha has been observed only in the brain. Isoform gamma is expressed in brain, placenta and uterus. Isoform delta is expressed in brain, kidney, placenta, prostate, small intestine and uterus.

Its subcellular location is the secreted. It localises to the cell membrane. It is found in the cytoplasm. The protein resides in the perinuclear region. It catalyses the reaction O-phospho-L-tyrosyl-[protein] + H2O = L-tyrosyl-[protein] + phosphate. Functionally, sequesters mitogen-activated protein kinases (MAPKs) such as MAPK1, MAPK3 and MAPK14 in the cytoplasm in an inactive form. The MAPKs bind to a dephosphorylated kinase interacting motif, phosphorylation of which by the protein kinase A complex releases the MAPKs for activation and translocation into the nucleus. The protein is Receptor-type tyrosine-protein phosphatase R (PTPRR) of Homo sapiens (Human).